The following is a 347-amino-acid chain: Protein RecA (347 aa).

67–74 (GPESSGKT) is a binding site for ATP.

Belongs to the RecA family. In terms of processing, the protein migrates as a 40 kDa protein in strains 69A and NCTC 11637. When overexpressed in E.coli a 38 kDa protein is made which is unable to complement the E.coli deletion mutant. It has been suggested this size difference is due to a post-translational modification.

It localises to the cytoplasm. Can catalyze the hydrolysis of ATP in the presence of single-stranded DNA, the ATP-dependent uptake of single-stranded DNA by duplex DNA, and the ATP-dependent hybridization of homologous single-stranded DNAs. It interacts with LexA causing its activation and leading to its autocatalytic cleavage. Functionally, deletion of this gene leads to the inability of the bacteria to perform homologous recombination, and markedly increases UV sensitivity. The sequence is that of Protein RecA from Helicobacter pylori (strain ATCC 700392 / 26695) (Campylobacter pylori).